The following is a 275-amino-acid chain: Methyltransferase str2 (275 aa).

This sequence belongs to the methyltransferase superfamily. LaeA methyltransferase family.

Its pathway is mycotoxin biosynthesis. Functionally, methyltransferase; part of the gene cluster that mediates the biosynthesis of strobilurin A, an antifungal polyketide that contains a key beta-methoxyacrylate toxophore that targets the complex III of the mitochondrial electron transport chain. Strobilurin biosynthesis begins with construction of benzoyl CoA by step-wise elimination of ammonia from phenylalanine by the phenylalanine ammonia-lyase str11, oxygenation by str8 and retro-Claisen reaction to form benzoic acid, which is activated to its CoA thiolester benzoyl CoA by the dedicated CoA ligase str10. Benzoyl CoA forms the starter unit for the highly reducing polyketide synthase stpks1 that produces the polyketide prestrobilutin A. The FAD-dependent oxygenase str9 then catalyzes the key oxidative rearrangement responsible for the creation of the beta-methoxyacrylate toxophore. Str9 performs epoxidation of the 2,3 olefin of prestrobilutin A, followed by Meinwald rearrangement to furnish the aldehyde intermediate. Rapid enolization of the aldehyde intermediate would give the beta-methoxyacrylate skeleton and methylations catalyzed by str2 and str3 complete the synthesis and lead to the production of strobilurin A. The short-chain dehydrogenase stl2 and the dehydrogenase str4 play a role in the shunt pathway leading to the production of bolineol. The cluster encodes no obvious halogenase gene that could be involved in production of strobilurin B, nor any obvious dimethylallyl-transferase that could be involved in the production of strobilurin G. It is possible that unknown proteins encoded in, or near, the cluster (such as str1 or stl1) may form new classes of halogenases or dimethylally-transferases, or that the responsible genes are located elsewhere on the genome. Similarly, proteins encoded by str5/str6 hydrolases appear to have no chemical role in the biosynthesis of strobilurin A. Finally, no obvious self-resistance gene is found within the cluster. The protein is Methyltransferase str2 of Strobilurus tenacellus.